A 297-amino-acid chain; its full sequence is Palmitoyl-protein thioesterase ABHD10, mitochondrial (297 aa).

Residues 1 to 43 (MAAWAPCRRWGWAAVSFGRHPGLSASLARKPPRAWWLSACRQK) constitute a mitochondrion transit peptide. Positions 69–196 (IIFIPGYLSN…EIEMKGEWTL (128 aa)) constitute an AB hydrolase-1 domain. Catalysis depends on charge relay system residues Ser143, Asp240, and His270.

This sequence belongs to the AB hydrolase superfamily.

The protein localises to the mitochondrion. The catalysed reaction is S-hexadecanoyl-L-cysteinyl-[protein] + H2O = L-cysteinyl-[protein] + hexadecanoate + H(+). It catalyses the reaction mycophenolic acid O-acyl-beta-D-glucuronide + H2O = mycophenolate + D-glucuronate + H(+). Its activity is regulated as follows. Inhibited by palmostatin-B. Acts as an acyl-protein thioesterase that hydrolyzes fatty acids from acylated residues in proteins. Regulates the mitochondrial S-depalmitoylation of the nucleophilic active site residue of peroxiredoxin-5/PRDX5, a key antioxidant protein, therefore modulating mitochondrial antioxidant ability. Also catalyzes the deglucuronidation of mycophenolic acid acyl-glucuronide, an active metabolite of the immunosuppressant drug mycophenolate. The polypeptide is Palmitoyl-protein thioesterase ABHD10, mitochondrial (Mus musculus (Mouse)).